The chain runs to 139 residues: Probable transcription termination protein NusA (139 aa).

The 67-residue stretch at 31 to 97 (DDRVVYVVTA…YNVTVSENDT (67 aa)) folds into the KH domain.

Belongs to the NusA family.

The protein localises to the cytoplasm. Its function is as follows. Participates in transcription termination. This Halobacterium salinarum (strain ATCC 29341 / DSM 671 / R1) protein is Probable transcription termination protein NusA.